The sequence spans 275 residues: Phosphite transport system permease protein PtxC (275 aa).

Transmembrane regions (helical) follow at residues 30-50, 88-108, 136-156, 221-241, and 249-269; these read LGQV…VGLL, LAMS…VAFV, LIMG…GVLA, ASTV…MGSL, and VAAI…FSGV. Residues 84–267 enclose the ABC transmembrane type-1 domain; sequence LIDTLAMSIA…AMVTLVDAFS (184 aa).

This sequence belongs to the binding-protein-dependent transport system permease family.

The protein resides in the cell inner membrane. Probably forms part of a binding-protein-dependent phosphite transporter. Probably responsible for the translocation of the substrate across the membrane. The polypeptide is Phosphite transport system permease protein PtxC (ptxC) (Stutzerimonas stutzeri (Pseudomonas stutzeri)).